We begin with the raw amino-acid sequence, 389 residues long: Galactokinase (389 aa).

33–36 lines the substrate pocket; that stretch reads EHTD. ATP contacts are provided by residues S67 and 124–130; that span reads GAGLSSS. S130 and E162 together coordinate Mg(2+). D174 (proton acceptor) is an active-site residue. Y224 contributes to the substrate binding site.

Belongs to the GHMP kinase family. GalK subfamily.

The protein localises to the cytoplasm. It carries out the reaction alpha-D-galactose + ATP = alpha-D-galactose 1-phosphate + ADP + H(+). The protein operates within carbohydrate metabolism; galactose metabolism. In terms of biological role, catalyzes the transfer of the gamma-phosphate of ATP to D-galactose to form alpha-D-galactose-1-phosphate (Gal-1-P). The sequence is that of Galactokinase from Fusobacterium nucleatum subsp. nucleatum (strain ATCC 25586 / DSM 15643 / BCRC 10681 / CIP 101130 / JCM 8532 / KCTC 2640 / LMG 13131 / VPI 4355).